We begin with the raw amino-acid sequence, 92 residues long: Large ribosomal subunit protein bL25 (92 aa).

Belongs to the bacterial ribosomal protein bL25 family. Part of the 50S ribosomal subunit; part of the 5S rRNA/L5/L18/L25 subcomplex. Contacts the 5S rRNA. Binds to the 5S rRNA independently of L5 and L18.

Its function is as follows. This is one of the proteins that binds to the 5S RNA in the ribosome where it forms part of the central protuberance. In Vibrio atlanticus (strain LGP32) (Vibrio splendidus (strain Mel32)), this protein is Large ribosomal subunit protein bL25.